Here is a 591-residue protein sequence, read N- to C-terminus: Glutathione S-transferase T2 (591 aa).

In terms of domain architecture, GST N-terminal spans 1–82 (MKLKVYADRM…YLSSAYASVV (82 aa)). Glutathione contacts are provided by residues 11-12 (SQ), 40-41 (QL), 53-54 (KV), and 66-67 (ES). The GST C-terminal domain occupies 89–226 (DLSKRAKIHS…EVLFRAKDRF (138 aa)). The interval 229-272 (QREMATASKPGPQSKIIQFSSIGGTSDGPNLVQDTTDRKARRRK) is disordered. A compositionally biased stretch (polar residues) spans 243–262 (KIIQFSSIGGTSDGPNLVQD). The region spanning 265-338 (DRKARRRKWS…HCRQRWRKIN (74 aa)) is the Myb-like domain.

Belongs to the GST superfamily. Theta family.

It localises to the peroxisome. The enzyme catalyses RX + glutathione = an S-substituted glutathione + a halide anion + H(+). Functionally, may be involved in the conjugation of reduced glutathione to a wide number of exogenous and endogenous hydrophobic electrophiles and have a detoxification role against certain herbicides. The polypeptide is Glutathione S-transferase T2 (GSTT2) (Arabidopsis thaliana (Mouse-ear cress)).